The chain runs to 478 residues: MNKHLLAKIALLSAVQLVTLSAFADVPLTPSQFAKAKSENFDKKVILSNLNKPHALLWGPDNQIWLTERATGKILRVNPESGSVKTVFQVPEIVNDADGQNGLLGFAFHPDFKNNPYIYISGTFKNPKSTDKELPNQTIIRRYTYNKSTDTLEKPVDLLAGLPSSKDHQSGRLVIGPDQKIYYTIGDQGRNQLAYLFLPNQAQHTPTQQELNGKDYHTYMGKVLRLNLDGSIPKDNPSFNGVVSHIYTLGHRNPQGLAFTPNGKLLQSEQGPNSDDEINLIVKGGNYGWPNVAGYKDDSGYAYANYSAAANKSIKDLAQNGVKVAAGVPVTKESEWTGKNFVPPLKTLYTVQDTYNYNDPTCGEMTYICWPTVAPSSAYVYKGGKKAITGWENTLLVPSLKRGVIFRIKLDPTYSTTYDDAVPMFKSNNRYRDVIASPDGNVLYVLTDTAGNVQKDDGSVTNTLENPGSLIKFTYKAK.

An N-terminal signal peptide occupies residues 1–24 (MNKHLLAKIALLSAVQLVTLSAFA). Gln-100 and Asp-167 together coordinate D-glucose. His-168 acts as the Proton acceptor in catalysis. 2 residues coordinate D-glucose: Gln-192 and Arg-252. The segment at 252–253 (RN) is PQQ. Ca(2+)-binding residues include Gly-271, Pro-272, Glu-277, Tyr-287, Ala-293, Tyr-295, Asp-297, and Glu-333. The pyrroloquinoline quinone site is built by Tyr-367, Thr-372, and Lys-401. A PQQ region spans residues 430 to 432 (RYR).

Belongs to the PQQ oxidoreductase GdhB family. As to quaternary structure, homodimer. Requires pyrroloquinoline quinone as cofactor. The cofactor is Ca(2+).

It catalyses the reaction a ubiquinone + D-glucose = D-glucono-1,5-lactone + a ubiquinol. Its function is as follows. Oxidizes glucose to gluconolactone. This Acinetobacter calcoaceticus protein is Quinoprotein glucose dehydrogenase B (gdhB).